The sequence spans 83 residues: Small cysteine-rich protein 3 (83 aa).

Residues Met-1–Gly-21 form the signal peptide. Positions Phe-22–Tyr-39 are excised as a propeptide. Residues Arg-25–Pro-35 show a composition bias toward basic and acidic residues. Positions Arg-25–Pro-44 are disordered.

This sequence belongs to the Cnidaria small cysteine-rich protein (SCRiP) family. alpha subfamily. Post-translationally, contains 4 disulfide bonds.

The protein localises to the secreted. The protein resides in the nematocyst. Functionally, this recombinant protein induces severe neurotoxicity on zebrafish larvae (Danio rerio) at a concentration of 230 mg/ml, but does not show toxicity when injected in blowfly larvae (Sarcophaga falculata). All fish incubated with this protein died within 16 hours of exposure. Has also been claimed to be implied in calcification, but this function seems improbable. The polypeptide is Small cysteine-rich protein 3 (Acropora millepora (Staghorn coral)).